The chain runs to 351 residues: UDP-3-O-acylglucosamine N-acyltransferase (351 aa).

The active-site Proton acceptor is histidine 240.

The protein belongs to the transferase hexapeptide repeat family. LpxD subfamily. As to quaternary structure, homotrimer.

It carries out the reaction a UDP-3-O-[(3R)-3-hydroxyacyl]-alpha-D-glucosamine + a (3R)-hydroxyacyl-[ACP] = a UDP-2-N,3-O-bis[(3R)-3-hydroxyacyl]-alpha-D-glucosamine + holo-[ACP] + H(+). It functions in the pathway bacterial outer membrane biogenesis; LPS lipid A biosynthesis. In terms of biological role, catalyzes the N-acylation of UDP-3-O-acylglucosamine using 3-hydroxyacyl-ACP as the acyl donor. Is involved in the biosynthesis of lipid A, a phosphorylated glycolipid that anchors the lipopolysaccharide to the outer membrane of the cell. The protein is UDP-3-O-acylglucosamine N-acyltransferase of Pseudomonas fluorescens (strain SBW25).